The primary structure comprises 538 residues: Chaperonin GroEL 1 (538 aa).

ATP is bound by residues 29–32, 86–90, glycine 413, 478–480, and aspartate 494; these read TLGP, DGTTT, and NAA.

It belongs to the chaperonin (HSP60) family. As to quaternary structure, forms a cylinder of 14 subunits composed of two heptameric rings stacked back-to-back. Interacts with the co-chaperonin GroES.

It localises to the cytoplasm. It carries out the reaction ATP + H2O + a folded polypeptide = ADP + phosphate + an unfolded polypeptide.. Functionally, together with its co-chaperonin GroES, plays an essential role in assisting protein folding. The GroEL-GroES system forms a nano-cage that allows encapsulation of the non-native substrate proteins and provides a physical environment optimized to promote and accelerate protein folding. In Corynebacterium glutamicum (strain R), this protein is Chaperonin GroEL 1.